The chain runs to 174 residues: Crossover junction endodeoxyribonuclease RuvC (174 aa).

Active-site residues include Asp-8, Glu-67, and Asp-139. Mg(2+) contacts are provided by Asp-8, Glu-67, and Asp-139.

It belongs to the RuvC family. In terms of assembly, homodimer which binds Holliday junction (HJ) DNA. The HJ becomes 2-fold symmetrical on binding to RuvC with unstacked arms; it has a different conformation from HJ DNA in complex with RuvA. In the full resolvosome a probable DNA-RuvA(4)-RuvB(12)-RuvC(2) complex forms which resolves the HJ. Mg(2+) is required as a cofactor.

It is found in the cytoplasm. The enzyme catalyses Endonucleolytic cleavage at a junction such as a reciprocal single-stranded crossover between two homologous DNA duplexes (Holliday junction).. In terms of biological role, the RuvA-RuvB-RuvC complex processes Holliday junction (HJ) DNA during genetic recombination and DNA repair. Endonuclease that resolves HJ intermediates. Cleaves cruciform DNA by making single-stranded nicks across the HJ at symmetrical positions within the homologous arms, yielding a 5'-phosphate and a 3'-hydroxyl group; requires a central core of homology in the junction. The consensus cleavage sequence is 5'-(A/T)TT(C/G)-3'. Cleavage occurs on the 3'-side of the TT dinucleotide at the point of strand exchange. HJ branch migration catalyzed by RuvA-RuvB allows RuvC to scan DNA until it finds its consensus sequence, where it cleaves and resolves the cruciform DNA. The polypeptide is Crossover junction endodeoxyribonuclease RuvC (Ectopseudomonas mendocina (strain ymp) (Pseudomonas mendocina)).